The chain runs to 505 residues: Tyrosine-protein kinase isoform SRK1 (505 aa).

2 stretches are compositionally biased toward polar residues: residues Met1 to Gly10 and Ala18 to Val31. Residues Met1 to Asp53 are disordered. The SH3 domain maps to Val54–Ser116. The 93-residue stretch at Trp122–Cys214 folds into the SH2 domain. A Protein kinase domain is found at Ile240–Phe493. ATP is bound by residues Leu246–Val254 and Lys268. Asp359 acts as the Proton acceptor in catalysis.

This sequence belongs to the protein kinase superfamily. Tyr protein kinase family. SRC subfamily.

The protein resides in the cytoplasm. It carries out the reaction L-tyrosyl-[protein] + ATP = O-phospho-L-tyrosyl-[protein] + ADP + H(+). This Spongilla lacustris (Freshwater sponge) protein is Tyrosine-protein kinase isoform SRK1 (SRK1).